The chain runs to 206 residues: Probable GTP-binding protein EngB (206 aa).

An EngB-type G domain is found at 25–198; it reads SRAEVAFAGR…AVRIEGWLAP (174 aa). Positions 40 and 62 each coordinate Mg(2+).

It belongs to the TRAFAC class TrmE-Era-EngA-EngB-Septin-like GTPase superfamily. EngB GTPase family. Mg(2+) serves as cofactor.

Its function is as follows. Necessary for normal cell division and for the maintenance of normal septation. The chain is Probable GTP-binding protein EngB from Thiobacillus denitrificans (strain ATCC 25259 / T1).